The chain runs to 55 residues: Large ribosomal subunit protein bL33B (55 aa).

This sequence belongs to the bacterial ribosomal protein bL33 family.

This chain is Large ribosomal subunit protein bL33B, found in Mycobacteroides abscessus (strain ATCC 19977 / DSM 44196 / CCUG 20993 / CIP 104536 / JCM 13569 / NCTC 13031 / TMC 1543 / L948) (Mycobacterium abscessus).